A 159-amino-acid polypeptide reads, in one-letter code: Transcriptional repressor NrdR (159 aa).

The segment at 3–34 is a zinc-finger region; the sequence is CPFCRHEDTQVVDSRVSEDGAAIRRRRRCSAC. The ATP-cone domain occupies 49–139; it reads PAVVKKDGSR…VYRRFEDVSE (91 aa).

Belongs to the NrdR family. Zn(2+) is required as a cofactor.

In terms of biological role, negatively regulates transcription of bacterial ribonucleotide reductase nrd genes and operons by binding to NrdR-boxes. The polypeptide is Transcriptional repressor NrdR (Burkholderia multivorans (strain ATCC 17616 / 249)).